The sequence spans 85 residues: Large ribosomal subunit protein bL27 (85 aa).

Residues 1–22 (MAHKKAGGSSRNGRDSESKRLG) form a disordered region.

This sequence belongs to the bacterial ribosomal protein bL27 family.

The polypeptide is Large ribosomal subunit protein bL27 (Tolumonas auensis (strain DSM 9187 / NBRC 110442 / TA 4)).